Consider the following 92-residue polypeptide: Trp operon repressor homolog (92 aa).

Residues 56-79 (QREVASKLGVSITKITRGAANLQD) mediate DNA binding.

The protein belongs to the TrpR family. In terms of assembly, homodimer.

It is found in the cytoplasm. Its function is as follows. This protein is an aporepressor. When complexed with L-tryptophan it binds the operator region of the trp operon and prevents the initiation of transcription. In Xylella fastidiosa (strain M23), this protein is Trp operon repressor homolog.